The sequence spans 740 residues: Death domain-associated protein 6 (740 aa).

Residues 1–55 form a disordered region; sequence MATANSIIVLDDDDEDEAAAQPGPSHPLPNAASPGAEAPSSSEPHGARGSSSSGG. The interval 1–160 is necessary for interaction with USP7 and ATRX; it reads MATANSIIVL…TSNEPSGNNP (160 aa). Position 25 is a phosphoserine (Ser-25). Residues 29 to 55 show a composition bias toward low complexity; that stretch reads PNAASPGAEAPSSSEPHGARGSSSSGG. A Glycyl lysine isopeptide (Lys-Gly) (interchain with G-Cter in SUMO2) cross-link involves residue Lys-142. A disordered region spans residues 147 to 185; that stretch reads PAATTSNEPSGNNPPTHLSLDPTNAENTASQSPRTRGSR. A compositionally biased stretch (polar residues) spans 149-181; sequence ATTSNEPSGNNPPTHLSLDPTNAENTASQSPRT. Phosphoserine occurs at positions 178 and 213. Coiled-coil stretches lie at residues 180-217 and 358-399; these read RTRG…ELDD and ARRL…ARLQ. The interaction with histone H3.3 stretch occupies residues 183–417; it reads GSRRQIQRLE…TPEASLDSGE (235 aa). The interval 347 to 570 is necessary for interaction with USP7; that stretch reads GVDPALSDPV…SPVSQLFELE (224 aa). A disordered region spans residues 384 to 724; that stretch reads DKSEEGERKK…PRPGTCKTSV (341 aa). Positions 391-395 match the Nuclear localization signal motif; that stretch reads RKKRR. Phosphoserine occurs at positions 412 and 424. The stretch at 430–489 forms a coiled coil; it reads ASRAETDDEDDEESDEEEEEEEEEEEEEATDSEEEEDLEQMQEGQEDDEEEDEEEEAAAG. A compositionally biased stretch (acidic residues) spans 435-486; it reads TDDEDDEESDEEEEEEEEEEEEEATDSEEEEDLEQMQEGQEDDEEEDEEEEA. The residue at position 459 (Thr-459) is a Phosphothreonine. Phosphoserine is present on residues Ser-495 and Ser-498. Residues 496-505 show a composition bias toward polar residues; sequence PMSSLQISNE. The tract at residues 501 to 625 is interaction with MAP3K5; that stretch reads QISNEKNLEP…GVSPHNWGDS (125 aa). Residue Lys-512 is modified to N6-acetyllysine. The span at 514-524 shows a compositional bias: polar residues; sequence ISRSSGEQQNK. Over residues 529-542 the composition is skewed to low complexity; that stretch reads SPSLLSEEPLAPSS. Positions 551–561 are enriched in acidic residues; the sequence is QPEELTLEEES. Ser-561 and Ser-580 each carry phosphoserine. Residues 578–590 show a composition bias toward polar residues; that stretch reads TPSSVETDISSSR. The interval 626-740 is interaction with SPOP; it reads GPPCKKSRKE…EEIIVLSDSD (115 aa). (Microbial infection) Interaction with Puumala hantavirus nucleoprotein stretches follow at residues 627–634 and 658–663; these read PPCKKSRK and KNGKKI. A Nuclear localization signal motif is present at residues 628 to 634; the sequence is PCKKSRK. Residues Lys-630 and Lys-631 each participate in a glycyl lysine isopeptide (Lys-Gly) (interchain with G-Cter in SUMO1) cross-link. The segment covering 650 to 660 has biased composition (basic and acidic residues); it reads ERQRSVHEKNG. Phosphoserine is present on residues Ser-668 and Ser-671. A compositionally biased stretch (low complexity) spans 673–683; the sequence is LASLAPVADSS. Ser-688, Ser-702, Ser-737, and Ser-739 each carry phosphoserine. Positions 693–711 are enriched in polar residues; that stretch reads LVTSSLCIPSPARLSQTPH. A sumo interaction motif (SIM) region spans residues 733–740; that stretch reads IIVLSDSD.

Belongs to the DAXX family. As to quaternary structure, homomultimer. Interacts (via C-terminus) with TNFRSF6 (via death domain). Interacts with PAX5, SLC2A4/GLUT4, MAP3K5, TGFBR2, phosphorylated dimeric HSPB1/HSP27, CENPC, ETS1, sumoylated PML, UBE2I, MCRS1 and TP53. Interacts (via N-terminus) with HIPK2 and HIPK3. Interacts with HIPK1, which induces translocation from PML/POD/ND10 nuclear bodies to chromatin and enhances association with HDAC1. Interacts (non-phosphorylated) with PAX3, PAX7, DEK, HDAC1, HDAC2, HDAC3, acetylated histone H4 and histones H2A, H2B, H3, H3.3 and H4. Interacts with SPOP; mediating CUL3-dependent proteasomal degradation. Interacts with CBP; the interaction is dependent the sumoylation of CBP and suppresses CBP transcriptional activity via recruitment of HDAC2 directly in the complex with TP53 and HIPK2. Interacts with AXIN1; the interaction stimulates the interaction of DAXX with TP53, stimulates 'Ser-46' phosphorylation of TP53 on and induces cell death on UV irradiation. Interacts with MDM2; the interaction is direct. Interacts with USP7; the interaction is direct and independent of MDM2 and TP53. Part of a complex with DAXX, MDM2 and USP7 under non-stress conditions. Interacts (via N-terminus) with RASSF1 (via C-terminus); the interaction is independent of MDM2 and TP53; RASSF1 isoform A disrupts interactions among MDM2, DAXX and USP7, thus contributing to the efficient activation of TP53 by promoting MDM2 self-ubiquitination in cell-cycle checkpoint control in response to DNA damage. Interacts with ATRX to form the chromatin remodeling complex ATRX:DAXX. Interacts with HSF1 (via homotrimeric form preferentially); this interaction relieves homotrimeric HSF1 from repression of its transcriptional activity by HSP90-dependent multichaperone complex upon heat shock. Interacts with SUMO1P1/SUMO5. In terms of assembly, (Microbial infection) Interacts with human cytomegalovirus/HHV-5 tegument phosphoprotein pp71 and protein UL123. (Microbial infection) Interacts with Epstein-Barr virus protein BNRF1. As to quaternary structure, (Microbial infection) Interacts with human adenovirus 5 E1B-55K protein; this interaction might alterate the normal interactions of DAXX, PML, and TP53, which may contribute to cell transformation. In terms of assembly, (Microbial infection) Interacts with Puumala hantavirus nucleoprotein. Post-translationally, sumoylated with SUMO1 on multiple lysine residues. Phosphorylated by HIPK1 upon glucose deprivation. In terms of processing, polyubiquitinated; which is promoted by CUL3 and SPOP and results in proteasomal degradation. Ubiquitinated by MDM2; inducing its degradation. Deubiquitinated by USP7; leading to stabilize it. Ubiquitous.

It is found in the cytoplasm. Its subcellular location is the nucleus. The protein localises to the nucleoplasm. It localises to the PML body. The protein resides in the nucleolus. It is found in the chromosome. Its subcellular location is the centromere. In terms of biological role, transcription corepressor known to repress transcriptional potential of several sumoylated transcription factors. Down-regulates basal and activated transcription. Its transcription repressor activity is modulated by recruiting it to subnuclear compartments like the nucleolus or PML/POD/ND10 nuclear bodies through interactions with MCSR1 and PML, respectively. Seems to regulate transcription in PML/POD/ND10 nuclear bodies together with PML and may influence TNFRSF6-dependent apoptosis thereby. Inhibits transcriptional activation of PAX3 and ETS1 through direct protein-protein interactions. Modulates PAX5 activity; the function seems to involve CREBBP. Acts as an adapter protein in a MDM2-DAXX-USP7 complex by regulating the RING-finger E3 ligase MDM2 ubiquitination activity. Under non-stress condition, in association with the deubiquitinating USP7, prevents MDM2 self-ubiquitination and enhances the intrinsic E3 ligase activity of MDM2 towards TP53, thereby promoting TP53 ubiquitination and subsequent proteasomal degradation. Upon DNA damage, its association with MDM2 and USP7 is disrupted, resulting in increased MDM2 autoubiquitination and consequently, MDM2 degradation, which leads to TP53 stabilization. Acts as a histone chaperone that facilitates deposition of histone H3.3. Acts as a targeting component of the chromatin remodeling complex ATRX:DAXX which has ATP-dependent DNA translocase activity and catalyzes the replication-independent deposition of histone H3.3 in pericentric DNA repeats outside S-phase and telomeres, and the in vitro remodeling of H3.3-containing nucleosomes. Does not affect the ATPase activity of ATRX but alleviates its transcription repression activity. Upon neuronal activation associates with regulatory elements of selected immediate early genes where it promotes deposition of histone H3.3 which may be linked to transcriptional induction of these genes. Required for the recruitment of histone H3.3:H4 dimers to PML-nuclear bodies (PML-NBs); the process is independent of ATRX and facilitated by ASF1A; PML-NBs are suggested to function as regulatory sites for the incorporation of newly synthesized histone H3.3 into chromatin. In case of overexpression of centromeric histone variant CENPA (as found in various tumors) is involved in its mislocalization to chromosomes; the ectopic localization involves a heterotypic tetramer containing CENPA, and histones H3.3 and H4 and decreases binding of CTCF to chromatin. Proposed to mediate activation of the JNK pathway and apoptosis via MAP3K5 in response to signaling from TNFRSF6 and TGFBR2. Interaction with HSPB1/HSP27 may prevent interaction with TNFRSF6 and MAP3K5 and block DAXX-mediated apoptosis. In contrast, in lymphoid cells JNC activation and TNFRSF6-mediated apoptosis may not involve DAXX. Shows restriction activity towards human cytomegalovirus (HCMV). Plays a role as a positive regulator of the heat shock transcription factor HSF1 activity during the stress protein response. This is Death domain-associated protein 6 (DAXX) from Homo sapiens (Human).